A 428-amino-acid polypeptide reads, in one-letter code: GTPase Obg (428 aa).

One can recognise an Obg domain in the interval 1–158; that stretch reads MFIDEVIITV…IKVKLELKLL (158 aa). The OBG-type G domain occupies 159 to 330; the sequence is ADVALVGYPS…ILYKTYDMLS (172 aa). GTP-binding positions include 165–172, 190–194, 212–215, 282–285, and 311–313; these read GYPSVGKS, FTTLE, DIPG, NKMD, and SVL. Mg(2+) is bound by residues Ser172 and Thr192. The OCT domain occupies 349-428; it reads ELKIEKEDFE…IADVEFEYFE (80 aa).

It belongs to the TRAFAC class OBG-HflX-like GTPase superfamily. OBG GTPase family. Monomer. It depends on Mg(2+) as a cofactor.

It is found in the cytoplasm. Functionally, an essential GTPase which binds GTP, GDP and possibly (p)ppGpp with moderate affinity, with high nucleotide exchange rates and a fairly low GTP hydrolysis rate. Plays a role in control of the cell cycle, stress response, ribosome biogenesis and in those bacteria that undergo differentiation, in morphogenesis control. The polypeptide is GTPase Obg (Fusobacterium nucleatum subsp. nucleatum (strain ATCC 25586 / DSM 15643 / BCRC 10681 / CIP 101130 / JCM 8532 / KCTC 2640 / LMG 13131 / VPI 4355)).